A 79-amino-acid polypeptide reads, in one-letter code: Acyl carrier protein (79 aa).

The region spanning 2–77 (SDIGERVKKI…DATKFLEKNA (76 aa)) is the Carrier domain. Serine 37 is subject to O-(pantetheine 4'-phosphoryl)serine.

It belongs to the acyl carrier protein (ACP) family. In terms of processing, 4'-phosphopantetheine is transferred from CoA to a specific serine of apo-ACP by AcpS. This modification is essential for activity because fatty acids are bound in thioester linkage to the sulfhydryl of the prosthetic group.

It localises to the cytoplasm. It participates in lipid metabolism; fatty acid biosynthesis. In terms of biological role, carrier of the growing fatty acid chain in fatty acid biosynthesis. This chain is Acyl carrier protein, found in Bradyrhizobium diazoefficiens (strain JCM 10833 / BCRC 13528 / IAM 13628 / NBRC 14792 / USDA 110).